Consider the following 179-residue polypeptide: Large ribosomal subunit protein uL5 (179 aa).

It belongs to the universal ribosomal protein uL5 family. In terms of assembly, part of the 50S ribosomal subunit; part of the 5S rRNA/L5/L18/L25 subcomplex. Contacts the 5S rRNA and the P site tRNA. Forms a bridge to the 30S subunit in the 70S ribosome.

This is one of the proteins that bind and probably mediate the attachment of the 5S RNA into the large ribosomal subunit, where it forms part of the central protuberance. In the 70S ribosome it contacts protein S13 of the 30S subunit (bridge B1b), connecting the 2 subunits; this bridge is implicated in subunit movement. Contacts the P site tRNA; the 5S rRNA and some of its associated proteins might help stabilize positioning of ribosome-bound tRNAs. This chain is Large ribosomal subunit protein uL5, found in Bacillus licheniformis (strain ATCC 14580 / DSM 13 / JCM 2505 / CCUG 7422 / NBRC 12200 / NCIMB 9375 / NCTC 10341 / NRRL NRS-1264 / Gibson 46).